A 224-amino-acid chain; its full sequence is Dimethyl sulfoxide reductase transcriptional activator (224 aa).

Residues 158-209 enclose the HTH bat-type domain; the sequence is LTDKQREAAAAAVAKGYYATPRGADLSDLATALGISKSAVSQRLSAVESKLA.

Its function is as follows. Involved in activating dmsEABCD gene expression related to dimethyl sulfoxide (DMSO) reductase. Required for anaerobic respiration on dimethyl sulfoxide (DMSO) and trimethylamine N-oxide (TMAO). This chain is Dimethyl sulfoxide reductase transcriptional activator (dmsR), found in Halobacterium salinarum (strain ATCC 700922 / JCM 11081 / NRC-1) (Halobacterium halobium).